A 412-amino-acid chain; its full sequence is [Pyruvate dehydrogenase (acetyl-transferring)] kinase isozyme 4, mitochondrial (412 aa).

The 231-residue stretch at I138–S368 folds into the Histidine kinase domain. Residues E254–R261, D293, S312–T313, and G329–L334 contribute to the ATP site.

This sequence belongs to the PDK/BCKDK protein kinase family. Homodimer. Interacts with the pyruvate dehydrogenase complex subunit DLAT, and is part of the multimeric pyruvate dehydrogenase complex that contains multiple copies of pyruvate dehydrogenase (E1), dihydrolipoamide acetyltransferase (DLAT, E2) and lipoamide dehydrogenase (DLD, E3).

It localises to the mitochondrion matrix. It carries out the reaction L-seryl-[pyruvate dehydrogenase E1 alpha subunit] + ATP = O-phospho-L-seryl-[pyruvate dehydrogenase E1 alpha subunit] + ADP + H(+). Its function is as follows. Kinase that plays a key role in regulation of glucose and fatty acid metabolism and homeostasis via phosphorylation of the pyruvate dehydrogenase subunits PDHA1 and PDHA2. This inhibits pyruvate dehydrogenase activity, and thereby regulates metabolite flux through the tricarboxylic acid cycle, down-regulates aerobic respiration and inhibits the formation of acetyl-coenzyme A from pyruvate. Inhibition of pyruvate dehydrogenase decreases glucose utilization and increases fat metabolism in response to prolonged fasting and starvation. Plays an important role in maintaining normal blood glucose levels under starvation, and is involved in the insulin signaling cascade. Via its regulation of pyruvate dehydrogenase activity, plays an important role in maintaining normal blood pH and in preventing the accumulation of ketone bodies under starvation. In the fed state, mediates cellular responses to glucose levels and to a high-fat diet. Regulates both fatty acid oxidation and de novo fatty acid biosynthesis. Plays a role in the generation of reactive oxygen species. Protects detached epithelial cells against anoikis. Plays a role in cell proliferation via its role in regulating carbohydrate and fatty acid metabolism. The protein is [Pyruvate dehydrogenase (acetyl-transferring)] kinase isozyme 4, mitochondrial (Pdk4) of Mus musculus (Mouse).